Reading from the N-terminus, the 331-residue chain is GTP 3',8-cyclase (331 aa).

The region spanning 9 to 233 (PFGRRITYLR…VRSSKVTGGP (225 aa)) is the Radical SAM core domain. Arginine 18 contacts GTP. Cysteine 25 and cysteine 29 together coordinate [4Fe-4S] cluster. Residue tyrosine 31 coordinates S-adenosyl-L-methionine. Cysteine 32 is a binding site for [4Fe-4S] cluster. GTP is bound at residue arginine 67. S-adenosyl-L-methionine is bound at residue glycine 71. Position 98 (threonine 98) interacts with GTP. Position 122 (serine 122) interacts with S-adenosyl-L-methionine. Lysine 159 is a GTP binding site. Methionine 193 serves as a coordination point for S-adenosyl-L-methionine. 2 residues coordinate [4Fe-4S] cluster: cysteine 257 and cysteine 260. Residue 262 to 264 (RVR) participates in GTP binding. Cysteine 274 lines the [4Fe-4S] cluster pocket.

It belongs to the radical SAM superfamily. MoaA family. Monomer and homodimer. It depends on [4Fe-4S] cluster as a cofactor.

It catalyses the reaction GTP + AH2 + S-adenosyl-L-methionine = (8S)-3',8-cyclo-7,8-dihydroguanosine 5'-triphosphate + 5'-deoxyadenosine + L-methionine + A + H(+). The protein operates within cofactor biosynthesis; molybdopterin biosynthesis. Its function is as follows. Catalyzes the cyclization of GTP to (8S)-3',8-cyclo-7,8-dihydroguanosine 5'-triphosphate. This is GTP 3',8-cyclase from Ectopseudomonas mendocina (strain ymp) (Pseudomonas mendocina).